Here is a 230-residue protein sequence, read N- to C-terminus: uncharacterized protein (230 aa).

10-34 (VVTGASSGIGEAIAKKLSQQGASIV) contributes to the NADP(+) binding site. S139 contacts substrate. Y152 functions as the Proton acceptor in the catalytic mechanism.

This sequence belongs to the short-chain dehydrogenases/reductases (SDR) family.

This is an uncharacterized protein from Staphylococcus epidermidis (strain ATCC 12228 / FDA PCI 1200).